The sequence spans 174 residues: tRNA (cytidine(56)-2'-O)-methyltransferase (174 aa).

Residues Leu-80, 105–109, and 123–130 contribute to the S-adenosyl-L-methionine site; these read GAEKV and ISNQPHSE.

The protein belongs to the aTrm56 family. As to quaternary structure, homodimer.

It is found in the cytoplasm. It catalyses the reaction cytidine(56) in tRNA + S-adenosyl-L-methionine = 2'-O-methylcytidine(56) in tRNA + S-adenosyl-L-homocysteine + H(+). Its function is as follows. Specifically catalyzes the AdoMet-dependent 2'-O-ribose methylation of cytidine at position 56 in tRNAs. In Metallosphaera sedula (strain ATCC 51363 / DSM 5348 / JCM 9185 / NBRC 15509 / TH2), this protein is tRNA (cytidine(56)-2'-O)-methyltransferase.